We begin with the raw amino-acid sequence, 480 residues long: MGPDTTSERVSEDLMQAVTCLKRVMVGMKSNGTDYVQEQTPSNSTTVICTLVKITGALERCIESNKAMNDVLNGKMKCTTCGATSVGLLSDCHDSATSTTTTVSHRSSEEPPRRKPSAAGGDHDDEELECSSIESRSIRSVSSSVHTSAEDDETNQTMMVPTDVADVINAIVAGTNGSSNSNTTSSSKSPQEEEEEHDLVMKSILSTTTSTSNTKLELSEKLENPLQDTALLDQFLQASLLGQTPTVTPASEENEEDKEQNAVLTSFLQILFANQQAGNAILDAGSSENDGSTSSSQPSPPADPTASLDSLAMFESLLAESMNGNVLDANTSSADQKAAARKRKSTPMKVPKSENGAGYICPMDGCNKVFKEKGSVHRHFVTHIGMRFNCDKCKASYTQKHALMLHQKIHANPDAYQCRGCGTNYTTQNGLRLHRQRNPACMEVSNALEFNTSLNTSISEALSGPLSKNSSPTKQMVSAP.

Disordered stretches follow at residues 92-160 (CHDS…TMMV), 174-198 (GTNG…EEHD), 282-307 (LDAG…PTAS), and 328-351 (DANT…MKVP). 4 stretches are compositionally biased toward low complexity: residues 95-105 (SATSTTTTVSH), 131-145 (SSIE…SSSV), 174-187 (GTNG…TSSS), and 286-296 (SSENDGSTSSS). 2 consecutive C2H2-type zinc fingers follow at residues 359–383 (YICP…FVTH) and 388–410 (FNCD…QKIH). Residues 416–441 (YQCRGCGTNYTTQNGLRLHRQRNPAC) form a C2H2-type 3; degenerate zinc finger. Residues 461-480 (ALSGPLSKNSSPTKQMVSAP) form a disordered region.

Its function is as follows. Probable transcription factor, involved in regulation of dopamine neuron lineage specification. May play a role in maintaining robustness of the Wnt/beta-catenin asymmetry pathway. This Caenorhabditis elegans protein is Zinc finger protein ztf-6.